Reading from the N-terminus, the 209-residue chain is uncharacterized protein (209 aa).

Belongs to the flavoredoxin family. FMN is required as a cofactor.

This is an uncharacterized protein from Halalkalibacterium halodurans (strain ATCC BAA-125 / DSM 18197 / FERM 7344 / JCM 9153 / C-125) (Bacillus halodurans).